A 180-amino-acid polypeptide reads, in one-letter code: ATP-dependent protease subunit HslV (180 aa).

The active site involves threonine 7. Na(+) is bound by residues alanine 165, cysteine 168, and threonine 171.

This sequence belongs to the peptidase T1B family. HslV subfamily. As to quaternary structure, a double ring-shaped homohexamer of HslV is capped on each side by a ring-shaped HslU homohexamer. The assembly of the HslU/HslV complex is dependent on binding of ATP.

The protein resides in the cytoplasm. The enzyme catalyses ATP-dependent cleavage of peptide bonds with broad specificity.. Its activity is regulated as follows. Allosterically activated by HslU binding. Its function is as follows. Protease subunit of a proteasome-like degradation complex believed to be a general protein degrading machinery. In Geobacillus sp. (strain WCH70), this protein is ATP-dependent protease subunit HslV.